The chain runs to 65 residues: Alpha-toxin Bot11 (65 aa).

The LCN-type CS-alpha/beta domain maps to 2 to 64 (KDGYIVDDRN…VRTVQAGRCR (63 aa)). Cystine bridges form between C12-C63, C16-C36, C22-C46, and C26-C48.

The protein belongs to the long (4 C-C) scorpion toxin superfamily. Sodium channel inhibitor family. Alpha subfamily. Expressed by the venom gland.

It localises to the secreted. Functionally, alpha toxins bind voltage-independently at site-3 of sodium channels (Nav) and inhibit the inactivation of the activated channels, thereby blocking neuronal transmission. The polypeptide is Alpha-toxin Bot11 (Buthus occitanus tunetanus (Common European scorpion)).